A 573-amino-acid chain; its full sequence is Methionine--tRNA ligase (573 aa).

Positions 10–20 (PYVNSVPHLGN) match the 'HIGH' region motif. The Zn(2+) site is built by Cys-143, Cys-146, Cys-156, and Cys-159. The 'KMSKS' region signature appears at 333-337 (KFSKS). Lys-336 is a binding site for ATP.

It belongs to the class-I aminoacyl-tRNA synthetase family. MetG type 1 subfamily. The cofactor is Zn(2+).

Its subcellular location is the cytoplasm. It catalyses the reaction tRNA(Met) + L-methionine + ATP = L-methionyl-tRNA(Met) + AMP + diphosphate. Functionally, is required not only for elongation of protein synthesis but also for the initiation of all mRNA translation through initiator tRNA(fMet) aminoacylation. This chain is Methionine--tRNA ligase, found in Saccharolobus solfataricus (strain ATCC 35092 / DSM 1617 / JCM 11322 / P2) (Sulfolobus solfataricus).